The sequence spans 201 residues: 3-isopropylmalate dehydratase small subunit (201 aa).

The protein belongs to the LeuD family. LeuD type 1 subfamily. Heterodimer of LeuC and LeuD.

It catalyses the reaction (2R,3S)-3-isopropylmalate = (2S)-2-isopropylmalate. Its pathway is amino-acid biosynthesis; L-leucine biosynthesis; L-leucine from 3-methyl-2-oxobutanoate: step 2/4. Catalyzes the isomerization between 2-isopropylmalate and 3-isopropylmalate, via the formation of 2-isopropylmaleate. The polypeptide is 3-isopropylmalate dehydratase small subunit (Shigella flexneri serotype 5b (strain 8401)).